We begin with the raw amino-acid sequence, 68 residues long: MKTQVIIFIMAVVFLQLLSQSEAFIFDLLKKLVGKRELRNIDLDQFDDMFDEPEISAADMRFLQELLK.

The signal sequence occupies residues 1-23 (MKTQVIIFIMAVVFLQLLSQSEA). Positions 37 to 68 (ELRNIDLDQFDDMFDEPEISAADMRFLQELLK) are excised as a propeptide.

Belongs to the non-disulfide-bridged peptide (NDBP) superfamily. Short antimicrobial peptide (group 4) family. Expressed by the venom gland.

The protein localises to the secreted. It localises to the target cell membrane. Antibacterial peptide with activity against both Gram-positive and Gram-negative bacteria probably by forming pores in the cell membrane. Also has weak hemolytic activity. Does not show antifungal activity. The sequence is that of Non-disulfide-bridged peptide 5.6 from Hoffmannihadrurus gertschi (Scorpion).